The sequence spans 1146 residues: Cell division cycle and apoptosis regulator protein 1 (1146 aa).

Positions 1–246 (MAQFGGQKNP…AQPQPQSLLQ (246 aa)) are interaction with AR. The interval 200–657 (QRIQTLPNQN…RALSSKGLKS (458 aa)) is interaction with GATA2. Residues 282 to 351 (IVSQPQPARR…RRERERSPRR (70 aa)) are disordered. 2 stretches are compositionally biased toward basic and acidic residues: residues 290 to 331 (RRLD…ERSP) and 338 to 349 (ERSPRRERERSP). Residue Ser-453 is modified to Phosphoserine. Positions 591–615 (KQQLVEKLQGERKKADGEQDEEEKD) form a coiled coil. A disordered region spans residues 599–635 (QGERKKADGEQDEEEKDDGEVKEIATPTHWSKLDPKA). A compositionally biased stretch (acidic residues) spans 608 to 618 (EQDEEEKDDGE). Thr-624 carries the post-translational modification Phosphothreonine. The region spanning 633 to 667 (PKAMKVNDLRKELESRALSSKGLKSQLIARLTKQL) is the SAP domain. A Glycyl lysine isopeptide (Lys-Gly) (interchain with G-Cter in ubiquitin) cross-link involves residue Lys-634. An interaction with GATA1 region spans residues 640–1146 (DLRKELESRA…EKSKENGSGV (507 aa)). Thr-664 carries the phosphothreonine modification. 4 stretches are compositionally biased toward basic and acidic residues: residues 671–684 (EQKE…KSEK), 691–716 (DKKS…RQER), 793–814 (KEDK…KKEE), and 829–852 (SGDD…KDDS). Disordered stretches follow at residues 671–716 (EQKE…RQER) and 793–912 (KEDK…KEKP). Phosphoserine is present on residues Ser-682 and Ser-694. The segment covering 853-884 (KDDDETEEDNNQDEYDPMEAEEAEDEDDDREE) has biased composition (acidic residues). Position 858 is a phosphothreonine (Thr-858). The segment covering 885-912 (EEVKRDDKRDVSRYCKDRPAKDKEKEKP) has biased composition (basic and acidic residues). Residue Lys-1008 forms a Glycyl lysine isopeptide (Lys-Gly) (interchain with G-Cter in SUMO1); alternate linkage. Lys-1008 participates in a covalent cross-link: Glycyl lysine isopeptide (Lys-Gly) (interchain with G-Cter in SUMO2); alternate. Positions 1029 to 1110 (DVGSLLQKLE…LQFENQLNKT (82 aa)) form a coiled coil. Glycyl lysine isopeptide (Lys-Gly) (interchain with G-Cter in SUMO2) cross-links involve residues Lys-1063 and Lys-1131.

Directly interacts with ESR1, NR3C1 and p53/TP53. Interacts (via N-terminus) with CALCOCO1. Interacts with MED1 and GATA1. Interacts with AR and GATA2.

Its subcellular location is the cytoplasm. It localises to the perinuclear region. In terms of biological role, associates with components of the Mediator and p160 coactivator complexes that play a role as intermediaries transducing regulatory signals from upstream transcriptional activator proteins to basal transcription machinery at the core promoter. Recruited to endogenous nuclear receptor target genes in response to the appropriate hormone. Also functions as a p53 coactivator. May thus play an important role in transcriptional regulation. May be involved in apoptosis signaling in the presence of the retinoid CD437. Apoptosis induction involves sequestration of 14-3-3 protein(s) and mediated altered expression of multiple cell cycle regulatory genes including MYC, CCNB1 and CDKN1A. Plays a role in cell cycle progression and/or cell proliferation. In association with CALCOCO1 enhances GATA1- and MED1-mediated transcriptional activation from the gamma-globin promoter during erythroid differentiation of K562 erythroleukemia cells. Can act as a both a coactivator and corepressor of AR-mediated transcription. Contributes to chromatin looping and AR transcription complex assembly by stabilizing AR-GATA2 association on chromatin and facilitating MED1 and RNA polymerase II recruitment to AR-binding sites. May play an important role in the growth and tumorigenesis of prostate cancer cells. The protein is Cell division cycle and apoptosis regulator protein 1 (Ccar1) of Mus musculus (Mouse).